Here is a 137-residue protein sequence, read N- to C-terminus: Small ribosomal subunit protein uS9 (137 aa).

Residues 105 to 117 (LKIEGHLSRDPRA) are compositionally biased toward basic and acidic residues. The segment at 105–137 (LKIEGHLSRDPRAKERRKYGLKKARKAPQFSKR) is disordered. Residues 118–137 (KERRKYGLKKARKAPQFSKR) are compositionally biased toward basic residues.

This sequence belongs to the universal ribosomal protein uS9 family.

The chain is Small ribosomal subunit protein uS9 from Prochlorococcus marinus (strain MIT 9211).